The chain runs to 199 residues: GTP cyclohydrolase-2 (199 aa).

52 to 56 (RMHSE) is a binding site for GTP. Residues C57, C68, and C70 each coordinate Zn(2+). GTP-binding positions include Q73, 94–96 (EGR), and T116. D128 (proton acceptor) is an active-site residue. The active-site Nucleophile is the R130. Positions 151 and 156 each coordinate GTP.

It belongs to the GTP cyclohydrolase II family. Requires Zn(2+) as cofactor.

The catalysed reaction is GTP + 4 H2O = 2,5-diamino-6-hydroxy-4-(5-phosphoribosylamino)-pyrimidine + formate + 2 phosphate + 3 H(+). It functions in the pathway cofactor biosynthesis; riboflavin biosynthesis; 5-amino-6-(D-ribitylamino)uracil from GTP: step 1/4. Functionally, catalyzes the conversion of GTP to 2,5-diamino-6-ribosylamino-4(3H)-pyrimidinone 5'-phosphate (DARP), formate and pyrophosphate. In Aliivibrio fischeri (strain ATCC 700601 / ES114) (Vibrio fischeri), this protein is GTP cyclohydrolase-2.